A 718-amino-acid chain; its full sequence is U-box domain-containing protein 5 (718 aa).

One can recognise a U-box domain in the interval 218 to 292 (TLPEKFKCTL…SEWCAKNGLD (75 aa)). 3 ARM repeats span residues 493–532 (PHGP…NLSS), 534–571 (MEIC…NLCS), and 573–613 (EKGR…QLCV). The segment at 662 to 704 (KEEEEEVSSRPEGRTTASPTSQVVTPVTHPEPVKITPSPKKSG) is disordered. The segment covering 676-686 (TTASPTSQVVT) has biased composition (polar residues).

The enzyme catalyses S-ubiquitinyl-[E2 ubiquitin-conjugating enzyme]-L-cysteine + [acceptor protein]-L-lysine = [E2 ubiquitin-conjugating enzyme]-L-cysteine + N(6)-ubiquitinyl-[acceptor protein]-L-lysine.. The protein operates within protein modification; protein ubiquitination. Its function is as follows. Functions as an E3 ubiquitin ligase. This chain is U-box domain-containing protein 5 (PUB5), found in Arabidopsis thaliana (Mouse-ear cress).